We begin with the raw amino-acid sequence, 556 residues long: Dihydroxy-acid dehydratase (556 aa).

Cys-47 serves as a coordination point for [2Fe-2S] cluster. Asp-79 provides a ligand contact to Mg(2+). Cys-120 provides a ligand contact to [2Fe-2S] cluster. Asp-121 and Lys-122 together coordinate Mg(2+). Lys-122 carries the N6-carboxylysine modification. Cys-192 provides a ligand contact to [2Fe-2S] cluster. Glu-444 is a binding site for Mg(2+). Residue Ser-470 is the Proton acceptor of the active site.

It belongs to the IlvD/Edd family. In terms of assembly, homodimer. [2Fe-2S] cluster serves as cofactor. Mg(2+) is required as a cofactor.

It carries out the reaction (2R)-2,3-dihydroxy-3-methylbutanoate = 3-methyl-2-oxobutanoate + H2O. The catalysed reaction is (2R,3R)-2,3-dihydroxy-3-methylpentanoate = (S)-3-methyl-2-oxopentanoate + H2O. Its pathway is amino-acid biosynthesis; L-isoleucine biosynthesis; L-isoleucine from 2-oxobutanoate: step 3/4. It functions in the pathway amino-acid biosynthesis; L-valine biosynthesis; L-valine from pyruvate: step 3/4. Functionally, functions in the biosynthesis of branched-chain amino acids. Catalyzes the dehydration of (2R,3R)-2,3-dihydroxy-3-methylpentanoate (2,3-dihydroxy-3-methylvalerate) into 2-oxo-3-methylpentanoate (2-oxo-3-methylvalerate) and of (2R)-2,3-dihydroxy-3-methylbutanoate (2,3-dihydroxyisovalerate) into 2-oxo-3-methylbutanoate (2-oxoisovalerate), the penultimate precursor to L-isoleucine and L-valine, respectively. This Prochlorococcus marinus (strain MIT 9211) protein is Dihydroxy-acid dehydratase.